Reading from the N-terminus, the 230-residue chain is Ureidoacrylate amidohydrolase RutB (230 aa).

Residue aspartate 24 is the Proton acceptor of the active site. Lysine 133 is an active-site residue. The Nucleophile role is filled by cysteine 166.

Belongs to the isochorismatase family. RutB subfamily.

The enzyme catalyses (Z)-3-ureidoacrylate + H2O + H(+) = (Z)-3-aminoacrylate + NH4(+) + CO2. It carries out the reaction (Z)-3-ureidoacrylate + H2O = (Z)-3-aminoacrylate + carbamate + H(+). The catalysed reaction is (Z)-2-methylureidoacrylate + H2O + H(+) = (Z)-2-methylaminoacrylate + NH4(+) + CO2. Functionally, hydrolyzes ureidoacrylate to form aminoacrylate and carbamate. The carbamate hydrolyzes spontaneously, thereby releasing one of the nitrogen atoms of the pyrimidine ring as ammonia and one of its carbon atoms as CO2. The chain is Ureidoacrylate amidohydrolase RutB from Escherichia coli O103:H2 (strain 12009 / EHEC).